A 339-amino-acid polypeptide reads, in one-letter code: MNTNPASMAVIGAGSYGTALAITLARNGHQVVLWGHDPKHIQQLQQDRCNRAFLPDAAFPDTLRLETDLACALAASRDVLVVVPSHVFGAVLHQLKPHLRKDARIVWATKGLEAETGRLLQDVAREVLGEAIPLAVISGPTFAKELAAGLPTAIALASTDVQFSEDLQQLLHCGKSFRVYSNPDFIGVQLGGAVKNVIAIGAGMSDGIGFGANARTALITRGLAEMTRLGTALGADPSTFMGMAGLGDLVLTCTDNQSRNRRFGIMLGQGLGVKEAQDNIGQVVEGYRNTKEVLALAQRHGVEMPITEQIYQVLYCHKNAREAALTLLGRTKKDEKIGI.

The NADPH site is built by S15, Y16, H36, and K110. 3 residues coordinate sn-glycerol 3-phosphate: K110, G139, and T141. A143 is an NADPH binding site. Sn-glycerol 3-phosphate contacts are provided by K195, D248, S258, R259, and N260. K195 serves as the catalytic Proton acceptor. R259 is a binding site for NADPH. Positions 283 and 285 each coordinate NADPH.

Belongs to the NAD-dependent glycerol-3-phosphate dehydrogenase family.

It localises to the cytoplasm. The catalysed reaction is sn-glycerol 3-phosphate + NAD(+) = dihydroxyacetone phosphate + NADH + H(+). The enzyme catalyses sn-glycerol 3-phosphate + NADP(+) = dihydroxyacetone phosphate + NADPH + H(+). It participates in membrane lipid metabolism; glycerophospholipid metabolism. Its function is as follows. Catalyzes the reduction of the glycolytic intermediate dihydroxyacetone phosphate (DHAP) to sn-glycerol 3-phosphate (G3P), the key precursor for phospholipid synthesis. The sequence is that of Glycerol-3-phosphate dehydrogenase [NAD(P)+] from Yersinia pseudotuberculosis serotype O:1b (strain IP 31758).